Here is a 441-residue protein sequence, read N- to C-terminus: MATALSGGFSKNALFILSAALMLQAVLGDGKTLVLLDNPNIRDTHSIFFRSLADRGFDLTFKTADDPGLSLIKYGQFLYDHLILFSPSVEDFGGNINVETITAFIDGGGNVLVAASSDIGDPLRELGSECGIEFDEEKTAVIDHHNYDISDPGEHTLIVADPENLLKAPTIVGKPTDKPVLFKGVGMVADPDNPLVLDILTGSSTSYSYFPDRPITQYPHAVGKNTLLIAGLQARNNARVVFSGSLHFFSDAFFNSAVQKAATGSKRYEQTGNQDLAEALSRWVFKEAGVLRVGDVTHHPVGESTPPAAYTVTDLVEYGIVIEMLSGGKWVPFDGDDIQLEFVRIDPFVRTYLKKNGGKYSVQFKLPDVYGVFQFKVDYNRLGYTHLYSSTQVSVRPLQHTQYERFIPSAFPYYASAFSMMAGLFVFSVVFLHMREKEKSD.

A signal peptide spans 1–28; it reads MATALSGGFSKNALFILSAALMLQAVLG. Over 29-410 the chain is Lumenal; it reads DGKTLVLLDN…TQYERFIPSA (382 aa). The helical transmembrane segment at 411 to 431 threads the bilayer; it reads FPYYASAFSMMAGLFVFSVVF. The Cytoplasmic segment spans residues 432–441; that stretch reads LHMREKEKSD.

This sequence belongs to the DDOST 48 kDa subunit family. In terms of assembly, component of the oligosaccharyltransferase (OST) complex.

The protein localises to the endoplasmic reticulum membrane. Its pathway is protein modification; protein glycosylation. Its function is as follows. Subunit of the oligosaccharyl transferase (OST) complex that catalyzes the initial transfer of a defined glycan (Glc(3)Man(9)GlcNAc(2) in eukaryotes) from the lipid carrier dolichol-pyrophosphate to an asparagine residue within an Asn-X-Ser/Thr consensus motif in nascent polypeptide chains, the first step in protein N-glycosylation. N-glycosylation occurs cotranslationally and the complex associates with the Sec61 complex at the channel-forming translocon complex that mediates protein translocation across the endoplasmic reticulum (ER). All subunits are required for a maximal enzyme activity. Required for the assembly of both SST3A- and SS3B-containing OST complexes. The chain is Dolichyl-diphosphooligosaccharide--protein glycosyltransferase 48 kDa subunit from Danio rerio (Zebrafish).